The primary structure comprises 947 residues: Serine-aspartate repeat-containing protein C (947 aa).

An N-terminal signal peptide occupies residues 1–50 (MNNKKTATNRKGMIPNRLNKFSIRKYSVGTASILVGTTLIFGLSGHEAKA). Positions 21–32 (FSIRKYSVGTAS) match the YSIRK-G/S signaling motif motif. The interval 51–164 (AEHTNGELNQ…STTPKTTTIK (114 aa)) is disordered. Positions 51-495 (AEHTNGELNQ…GSSTANGDQK (445 aa)) are ligand binding A region. Residues 56–71 (GELNQSKNETTAPSEN) are compositionally biased toward polar residues. The segment covering 72-83 (KTTKKVDSRQLK) has biased composition (basic and acidic residues). A compositionally biased stretch (polar residues) spans 84 to 155 (DNTQTATADQ…SNLTQAKDVS (72 aa)). CNA-B domains lie at 496-606 (KYNL…YKTP) and 607-717 (KYSL…EEET). The disordered stretch occupies residues 678–927 (TQTGTNTTED…NNSNNGTLFG (250 aa)). Composition is skewed to acidic residues over residues 685 to 695 (TEDDKDADGGE) and 712 to 886 (YYEE…DSDS). Positions 910-914 (LPETG) match the LPXTG sorting signal motif. Residues 912–927 (ETGSENNNSNNGTLFG) show a composition bias toward low complexity. Thr913 is subject to Pentaglycyl murein peptidoglycan amidated threonine. The propeptide at 914–947 (GSENNNSNNGTLFGGLFAALGSLLLFGRRKKQNK) is removed by sortase.

Belongs to the serine-aspartate repeat-containing protein (SDr) family. In terms of assembly, homodimerizes; via N2-Domain. Interacts with host NRXN1; this interaction mediates bacterial attachment to host cells.

Its subcellular location is the secreted. The protein resides in the cell wall. Cell surface-associated calcium-binding protein which plays an important role in adhesion and pathogenesis. Mediates interactions with components of the extracellular matrix such as host NRXN1 to promote bacterial adhesion. The protein is Serine-aspartate repeat-containing protein C (sdrC) of Staphylococcus aureus (strain Newman).